The primary structure comprises 141 residues: NADPH-dependent 7-cyano-7-deazaguanine reductase (141 aa).

Cysteine 34 serves as the catalytic Thioimide intermediate. Aspartate 41 (proton donor) is an active-site residue. Substrate contacts are provided by residues 56-58 (VEL) and 75-76 (HE).

Belongs to the GTP cyclohydrolase I family. QueF type 1 subfamily.

It is found in the cytoplasm. It carries out the reaction 7-aminomethyl-7-carbaguanine + 2 NADP(+) = 7-cyano-7-deazaguanine + 2 NADPH + 3 H(+). The protein operates within tRNA modification; tRNA-queuosine biosynthesis. Its function is as follows. Catalyzes the NADPH-dependent reduction of 7-cyano-7-deazaguanine (preQ0) to 7-aminomethyl-7-deazaguanine (preQ1). This Acidithiobacillus ferrooxidans (strain ATCC 23270 / DSM 14882 / CIP 104768 / NCIMB 8455) (Ferrobacillus ferrooxidans (strain ATCC 23270)) protein is NADPH-dependent 7-cyano-7-deazaguanine reductase.